The chain runs to 176 residues: MSLLNVPAGKELPEDIYVVIEIPANADPIKYEVDKESGALFVDRFMSTAMFYPCNYGYINHTLSLDGDPVDVLVPTPYPLQPGAVIRCRPVGVLKMTDESGEDAKLVAVPHTKLSKEYDHIKDVNDLPELLKAQITHFFEHYKDLEKGKWVKVDGWDNAEAAKAEIVASFERAAKK.

Substrate-binding residues include Lys-30, Arg-44, and Tyr-56. Mg(2+) is bound by residues Asp-66, Asp-71, and Asp-103. Residue Tyr-142 coordinates substrate.

Belongs to the PPase family. Homohexamer. The cofactor is Mg(2+).

The protein resides in the cytoplasm. The catalysed reaction is diphosphate + H2O = 2 phosphate + H(+). Catalyzes the hydrolysis of inorganic pyrophosphate (PPi) forming two phosphate ions. The protein is Inorganic pyrophosphatase of Salmonella typhi.